The following is a 286-amino-acid chain: Bifunctional protein FolD (286 aa).

NADP(+) is bound by residues 165–167 (GRS) and Ser190.

This sequence belongs to the tetrahydrofolate dehydrogenase/cyclohydrolase family. In terms of assembly, homodimer.

It carries out the reaction (6R)-5,10-methylene-5,6,7,8-tetrahydrofolate + NADP(+) = (6R)-5,10-methenyltetrahydrofolate + NADPH. It catalyses the reaction (6R)-5,10-methenyltetrahydrofolate + H2O = (6R)-10-formyltetrahydrofolate + H(+). It functions in the pathway one-carbon metabolism; tetrahydrofolate interconversion. Functionally, catalyzes the oxidation of 5,10-methylenetetrahydrofolate to 5,10-methenyltetrahydrofolate and then the hydrolysis of 5,10-methenyltetrahydrofolate to 10-formyltetrahydrofolate. The chain is Bifunctional protein FolD from Staphylococcus aureus (strain JH9).